Consider the following 434-residue polypeptide: CCA tRNA nucleotidyltransferase 1, mitochondrial (434 aa).

A mitochondrion-targeting transit peptide spans 1-41; sequence MLRCLYHWHRPVLNRRWSRLCLPKQYLFTMKLQSPEFQSLF. Positions 64 and 67 each coordinate ATP. 2 residues coordinate CTP: glycine 64 and arginine 67. Mg(2+) contacts are provided by aspartate 77 and aspartate 79. ATP-binding residues include arginine 151, aspartate 194, arginine 197, arginine 200, and arginine 203. Residues arginine 151, aspartate 194, arginine 197, arginine 200, and arginine 203 each coordinate CTP. The residue at position 400 (serine 400) is a Phosphoserine. At lysine 402 the chain carries N6-acetyllysine.

This sequence belongs to the tRNA nucleotidyltransferase/poly(A) polymerase family. Monomer, and homodimer; disulfide-linked. Mg(2+) serves as cofactor.

The protein localises to the mitochondrion. Its subcellular location is the cytoplasm. It localises to the nucleus. The enzyme catalyses a tRNA precursor + 2 CTP + ATP = a tRNA with a 3' CCA end + 3 diphosphate. It carries out the reaction a tRNA with a 3' CCA end + 2 CTP + ATP = a tRNA with a 3' CCACCA end + 3 diphosphate. In terms of biological role, nucleotidyltransferase that catalyzes the addition and repair of the essential 3'-terminal CCA sequence in tRNAs, which is necessary for the attachment of amino acids to the 3' terminus of tRNA molecules, using CTP and ATP as substrates. tRNA 3'-terminal CCA addition is required both for tRNA processing and repair. Promotes tRNA repair and recycling downstream of the ribosome-associated quality control (RQC) pathway by mediating addition of the tRNA 3'-terminal CCA following cleavage by ANKZF1 and repair by ELAC1. Also involved in tRNA surveillance by mediating tandem CCA addition to generate a CCACCA at the 3' terminus of unstable tRNAs and tRNA-like transcripts. While stable tRNAs receive only 3'-terminal CCA, unstable tRNAs beginning with GG are marked with CCACCA and rapidly degraded. The structural flexibility of RNA controls the choice between CCA versus CCACCA addition: following the first CCA addition cycle, nucleotide-binding to the active site triggers a clockwise screw motion, producing torque on the RNA. This ejects stable RNAs, whereas unstable RNAs are refolded while bound to the enzyme and subjected to a second CCA catalytic cycle. Adds 2 C residues (CC-) to the 3' terminus of tRNA molecules instead of a complete CCA end as isoform 1 does (in vitro). This is CCA tRNA nucleotidyltransferase 1, mitochondrial from Homo sapiens (Human).